The chain runs to 208 residues: Ribonuclease HII (208 aa).

Residues 5–198 (PLIAGVDEVG…CQPRLEHDCR (194 aa)) form the RNase H type-2 domain. Asp-11, Glu-12, and Asp-106 together coordinate a divalent metal cation.

The protein belongs to the RNase HII family. Requires Mn(2+) as cofactor. Mg(2+) is required as a cofactor.

Its subcellular location is the cytoplasm. The catalysed reaction is Endonucleolytic cleavage to 5'-phosphomonoester.. Functionally, endonuclease that specifically degrades the RNA of RNA-DNA hybrids. This is Ribonuclease HII from Microcystis aeruginosa (strain NIES-843 / IAM M-2473).